The following is a 796-amino-acid chain: Serine/threonine-protein kinase ATG1 (796 aa).

The Protein kinase domain occupies 9-304 (YVVGAEIGRG…FQEFFNDPVI (296 aa)). ATP is bound by residues 15–23 (IGRGSFANV) and Lys38. The active-site Proton acceptor is the Asp155. Residues 360–370 (LEEEDEEEDQD) are compositionally biased toward acidic residues. Disordered stretches follow at residues 360 to 382 (LEEE…IQHM), 389 to 408 (LLNK…RREL), and 450 to 480 (PYTR…KVPI). Polar residues predominate over residues 389–403 (LLNKTTQKQTEVQSQ). The segment covering 453 to 470 (RRYSSSSRSSSTGSNQRR) has biased composition (low complexity).

The protein belongs to the protein kinase superfamily. Ser/Thr protein kinase family. APG1/unc-51/ULK1 subfamily. As to quaternary structure, homodimer. Forms a ternary complex with ATG13 and ATG17.

Its subcellular location is the cytoplasm. The protein resides in the preautophagosomal structure membrane. The catalysed reaction is L-seryl-[protein] + ATP = O-phospho-L-seryl-[protein] + ADP + H(+). It carries out the reaction L-threonyl-[protein] + ATP = O-phospho-L-threonyl-[protein] + ADP + H(+). Functionally, serine/threonine protein kinase involved in the cytoplasm to vacuole transport (Cvt) and found to be essential in autophagy, where it is required for the formation of autophagosomes. Involved in the clearance of protein aggregates which cannot be efficiently cleared by the proteasome. Required for selective autophagic degradation of the nucleus (nucleophagy) as well as for mitophagy which contributes to regulate mitochondrial quantity and quality by eliminating the mitochondria to a basal level to fulfill cellular energy requirements and preventing excess ROS production. Also involved in endoplasmic reticulum-specific autophagic process, in selective removal of ER-associated degradation (ERAD) substrates. Plays a key role in ATG9 and ATG23 cycling through the pre-autophagosomal structure and is necessary to promote ATG18 binding to ATG9 through phosphorylation of ATG9. Catalyzes phosphorylation of ATG4, decreasing the interaction between ATG4 and ATG8 and impairing deconjugation of PE-conjugated forms of ATG8. This chain is Serine/threonine-protein kinase ATG1, found in Komagataella pastoris (Yeast).